A 1062-amino-acid polypeptide reads, in one-letter code: Valine--tRNA ligase, mitochondrial (1062 aa).

The transit peptide at 1 to 15 (MPHLPLASFRPPLRG) directs the protein to the mitochondrion. Positions 1-73 (MPHLPLASFR…AKGKPPAEST (73 aa)) are disordered. A compositionally biased stretch (basic and acidic residues) spans 42 to 56 (RNREAKQKRLREKQA). The 'HIGH' region signature appears at 146–156 (PNVTGSLHIGH). The 'KMSKS' region motif lies at 659–663 (KMSKS). An ATP-binding site is contributed by Lys662.

This sequence belongs to the class-I aminoacyl-tRNA synthetase family.

It localises to the mitochondrion. It carries out the reaction tRNA(Val) + L-valine + ATP = L-valyl-tRNA(Val) + AMP + diphosphate. In terms of biological role, catalyzes the attachment of valine to tRNA(Val) in a two-step reaction: valine is first activated by ATP to form Val-AMP and then transferred to the acceptor end of tRNA(Val). The sequence is that of Valine--tRNA ligase, mitochondrial (VARS2) from Sus scrofa (Pig).